A 389-amino-acid polypeptide reads, in one-letter code: Chalcone synthase J (389 aa).

The active site involves Cys164.

It belongs to the thiolase-like superfamily. Chalcone/stilbene synthases family.

The enzyme catalyses (E)-4-coumaroyl-CoA + 3 malonyl-CoA + 3 H(+) = 2',4,4',6'-tetrahydroxychalcone + 3 CO2 + 4 CoA. It participates in secondary metabolite biosynthesis; flavonoid biosynthesis. The primary product of this enzyme is 4,2',4',6'-tetrahydroxychalcone (also termed naringenin-chalcone or chalcone) which can under specific conditions spontaneously isomerize into naringenin. The sequence is that of Chalcone synthase J (CHSJ) from Petunia hybrida (Petunia).